Consider the following 264-residue polypeptide: Proteasome subunit beta type-4 (264 aa).

M1 carries the post-translational modification N-acetylmethionine. Positions 1–45 are excised as a propeptide; the sequence is MEALLESRSGLWAGGPAPGQFYRIPPTPGSSVDPVSALYGSPITR. Residue Y102 is modified to Phosphotyrosine.

The protein belongs to the peptidase T1B family. The 26S proteasome consists of a 20S proteasome core and two 19S regulatory subunits. The 20S proteasome core is a barrel-shaped complex made of 28 subunits that are arranged in four stacked rings. The two outer rings are each formed by seven alpha subunits, and the two inner rings are formed by seven beta subunits. The proteolytic activity is exerted by three beta-subunits PSMB5, PSMB6 and PSMB7. Forms a ternary complex with SMAD1 and OAZ1 before PSMB4 is incorporated into the 20S proteasome. Interacts with PRPF19.

It localises to the cytoplasm. Its subcellular location is the nucleus. Functionally, non-catalytic component of the 20S core proteasome complex involved in the proteolytic degradation of most intracellular proteins. This complex plays numerous essential roles within the cell by associating with different regulatory particles. Associated with two 19S regulatory particles, forms the 26S proteasome and thus participates in the ATP-dependent degradation of ubiquitinated proteins. The 26S proteasome plays a key role in the maintenance of protein homeostasis by removing misfolded or damaged proteins that could impair cellular functions, and by removing proteins whose functions are no longer required. Associated with the PA200 or PA28, the 20S proteasome mediates ubiquitin-independent protein degradation. This type of proteolysis is required in several pathways including spermatogenesis (20S-PA200 complex) or generation of a subset of MHC class I-presented antigenic peptides (20S-PA28 complex). SMAD1/OAZ1/PSMB4 complex mediates the degradation of the CREBBP/EP300 repressor SNIP1. The chain is Proteasome subunit beta type-4 (PSMB4) from Bos taurus (Bovine).